Consider the following 346-residue polypeptide: Dimethyladenosine transferase 1, mitochondrial (346 aa).

Residues Met-1–Leu-27 constitute a mitochondrion transit peptide. The S-adenosyl-L-methionine site is built by Leu-38, Gly-63, Glu-85, Lys-86, Asp-111, Val-112, and Asn-141.

Belongs to the class I-like SAM-binding methyltransferase superfamily. rRNA adenine N(6)-methyltransferase family. KsgA subfamily. Interacts with mitochondrial RNA polymerase POLRMT. Interacts with TFAM. Bound to the maturing mtSSU until the late stages of assembly. Ubiquitously expressed.

The protein resides in the mitochondrion. The catalysed reaction is adenosine(N)/adenosine(N+1) in rRNA + 4 S-adenosyl-L-methionine = N(6)-dimethyladenosine(N)/N(6)-dimethyladenosine(N+1) in rRNA + 4 S-adenosyl-L-homocysteine + 4 H(+). Its function is as follows. Mitochondrial methyltransferase which uses S-adenosyl methionine to dimethylate two highly conserved adjacent adenosine residues (A1583 and A1584) within the loop of helix 45 at the 3-prime end of 12S rRNA, thereby regulating the assembly or stability of the small subunit of the mitochondrial ribosome. Also required for basal transcription of mitochondrial DNA, probably via its interaction with POLRMT and TFAM. Stimulates transcription independently of the methyltransferase activity. In Homo sapiens (Human), this protein is Dimethyladenosine transferase 1, mitochondrial.